We begin with the raw amino-acid sequence, 90 residues long: Probable Fe(2+)-trafficking protein (90 aa).

The protein belongs to the Fe(2+)-trafficking protein family.

Could be a mediator in iron transactions between iron acquisition and iron-requiring processes, such as synthesis and/or repair of Fe-S clusters in biosynthetic enzymes. The protein is Probable Fe(2+)-trafficking protein of Azotobacter vinelandii (strain DJ / ATCC BAA-1303).